The chain runs to 367 residues: Glutamate 5-kinase (367 aa).

Position 9 (K9) interacts with ATP. Residues S49, D136, and N148 each coordinate substrate. ATP contacts are provided by residues 168-169 and 210-216; these read TD and TGGMKSK. The region spanning 276–350 is the PUA domain; it reads SGQIEIDAGA…GMQSQHIQAR (75 aa).

It belongs to the glutamate 5-kinase family.

It is found in the cytoplasm. The enzyme catalyses L-glutamate + ATP = L-glutamyl 5-phosphate + ADP. The protein operates within amino-acid biosynthesis; L-proline biosynthesis; L-glutamate 5-semialdehyde from L-glutamate: step 1/2. Its function is as follows. Catalyzes the transfer of a phosphate group to glutamate to form L-glutamate 5-phosphate. This Bacillus cereus (strain ATCC 10987 / NRS 248) protein is Glutamate 5-kinase.